The primary structure comprises 359 residues: Alanine racemase, biosynthetic (359 aa).

Lysine 34 acts as the Proton acceptor; specific for D-alanine in catalysis. Residue lysine 34 is modified to N6-(pyridoxal phosphate)lysine. Arginine 129 contacts substrate. Tyrosine 255 (proton acceptor; specific for L-alanine) is an active-site residue. Methionine 303 lines the substrate pocket.

Belongs to the alanine racemase family. Monomer but homodimer in the presence of the substrate. It depends on pyridoxal 5'-phosphate as a cofactor.

The catalysed reaction is L-alanine = D-alanine. Its pathway is amino-acid biosynthesis; D-alanine biosynthesis; D-alanine from L-alanine: step 1/1. It functions in the pathway cell wall biogenesis; peptidoglycan biosynthesis. Its function is as follows. Catalyzes the interconversion of L-alanine and D-alanine. This Shigella dysenteriae protein is Alanine racemase, biosynthetic (alr).